The chain runs to 306 residues: Aspartate carbamoyltransferase catalytic subunit (306 aa).

The carbamoyl phosphate site is built by Arg-51 and Thr-52. Residue Lys-79 participates in L-aspartate binding. Residues Arg-101, His-129, and Gln-132 each contribute to the carbamoyl phosphate site. Arg-162 and Arg-213 together coordinate L-aspartate. Carbamoyl phosphate-binding residues include Ala-254 and Pro-255.

It belongs to the aspartate/ornithine carbamoyltransferase superfamily. ATCase family. As to quaternary structure, heterododecamer (2C3:3R2) of six catalytic PyrB chains organized as two trimers (C3), and six regulatory PyrI chains organized as three dimers (R2).

The enzyme catalyses carbamoyl phosphate + L-aspartate = N-carbamoyl-L-aspartate + phosphate + H(+). The protein operates within pyrimidine metabolism; UMP biosynthesis via de novo pathway; (S)-dihydroorotate from bicarbonate: step 2/3. Its function is as follows. Catalyzes the condensation of carbamoyl phosphate and aspartate to form carbamoyl aspartate and inorganic phosphate, the committed step in the de novo pyrimidine nucleotide biosynthesis pathway. The protein is Aspartate carbamoyltransferase catalytic subunit of Bacillus thuringiensis (strain Al Hakam).